An 886-amino-acid chain; its full sequence is MKAGRAFGCLFWALLYCVLYLDLVSGNSADDELMDFDFADSNDAAMEDWQLDDLEEAKKAEQAEKKLESNMLDFSVDLDEPEPEKQLPPFDWRERVLRNALAKALADEGLRQKFAEVLPILRMLSSQQRLALSALISAQMNAKKGHELKFEQVRMMFGNEKKLLLPIVFDIANLIKSSTRKYINLGSDLASSALYHTPINRREDDLTPEESQQDDQLGTIAVEVEPKKVSTEEVQLESLEDFFDEMGSEVLDPQMINEALTGDLHDNKTKTFKPENHGQRVRRSANEFVHKLTRSVPASVTEQQLLGGIAGRTIKLNTTAFQQPSSQEEEKMASSNGGQSYSEVEDLAFAGLNGTEIPLSADERLDLQRNSAEETEEPLPSPEELIAGPRYRLGKRPLPGQKSGSPIKRKRVTSSLRGRPKTAASSHKPVVTPPNKKCERFTSNMCIRTDDYPLEQIMGSIRRHKNAMSALLAEFYDKPNNNLEFSDDFDDFSLSKKRREDEGSAGGMCQSVVRYARPQKAKSASGEWKYIVNTGQHTQTLRLEKCSNPVESCSYLAQTYRSHCSQVYNYHRLLSWDKVRGLHVDIFKVPTCCSCQVDGYRQQFPPLSSIQAKDYSPQSPVINHSHNGYSTINEEDLDYAEESEEDELGLRYPSFNNRETNELYSSSNKVRVKLPGISSSVGPYLSPPDDDEDRYGGYKSSSSSSKKYYSQVSRRRPQHSEARLDLDLAPSETHSDQEPPPPQHHQHHHLQYHRPQEELPSAYDFHRPQVYQPEREQLPLVRDPALSPVSAPVLASPAPPLPMPPMPIKQVPSHHQAHHQQPHHHLHQSTGKVAANRDPASMHHQPPRRPTQQWLPGQRRPFRPSAPLSGSGISRRHYHNRRQSIQ.

The N-terminal stretch at 1–29 (MKAGRAFGCLFWALLYCVLYLDLVSGNSA) is a signal peptide. Residues 30-498 (DDELMDFDFA…FDDFSLSKKR (469 aa)) constitute a propeptide that is removed on maturation. Residues asparagine 267 and asparagine 317 are each glycosylated (N-linked (GlcNAc...) asparagine). The tract at residues 321–340 (FQQPSSQEEEKMASSNGGQS) is disordered. Asparagine 353 carries N-linked (GlcNAc...) asparagine glycosylation. Residues 369 to 436 (RNSAEETEEP…HKPVVTPPNK (68 aa)) are disordered. Residues 508–597 (MCQSVVRYAR…KVPTCCSCQV (90 aa)) form the Spaetzle domain. Disulfide bonds link cysteine 509-cysteine 564, cysteine 546-cysteine 593, and cysteine 553-cysteine 595. N-linked (GlcNAc...) asparagine glycosylation is present at asparagine 623. 2 disordered regions span residues 675–754 (PGIS…QYHR) and 789–886 (VSAP…QSIQ). A compositionally biased stretch (low complexity) spans 698-710 (YKSSSSSSKKYYS). Positions 797-807 (PAPPLPMPPMP) are enriched in pro residues. 2 stretches are compositionally biased toward basic residues: residues 815–827 (HQAHHQQPHHHLH) and 874–886 (SRRHYHNRRQSIQ).

In terms of assembly, homodimer; disulfide-linked. In terms of tissue distribution, detected in the fan-shaped body which is a component of the locomotion center in the central nervous system (CNS) (at protein level). Expressed in the optic lobes and brain.

In terms of biological role, neurotrophin which may function as a ligand for the Toll-related receptors Toll-7 and Tollo. Binds to Toll-7 and probably acts as its ligand in promoting motor axon targeting and neuronal survival in the central nervous system (CNS). Involved in synaptic targeting of ISNb/d motorneurons and also some SNa motorneurons. In larvae, involved in the negative regulation of the tracheal immune response to bacterial infection perhaps by acting as a ligand for the Toll-related receptor Tollo. May be involved in the normal development of specific neurons at the neuromuscular junction. This chain is Neurotrophin 1, found in Drosophila melanogaster (Fruit fly).